Reading from the N-terminus, the 142-residue chain is Hemoglobin subunit alpha (142 aa).

A Globin domain is found at 2 to 142 (HLTADDKKHI…VSNVLTSKYR (141 aa)). 2 residues coordinate heme b: histidine 59 and histidine 88.

Belongs to the globin family. In terms of assembly, heterotetramer of two alpha chains and two beta chains. As to expression, red blood cells.

Its function is as follows. Involved in oxygen transport from the lung to the various peripheral tissues. The polypeptide is Hemoglobin subunit alpha (hba-A) (Xenopus tropicalis (Western clawed frog)).